The primary structure comprises 276 residues: Small ribosomal subunit protein uS3 (276 aa).

The KH type-2 domain maps to 39–110 (IRRETMKFFK…KINIKIKEIK (72 aa)). The interval 218–243 (DAGQVINRKSSREKSEHFDRSRVDDR) is disordered. Over residues 227–243 (SSREKSEHFDRSRVDDR) the composition is skewed to basic and acidic residues.

The protein belongs to the universal ribosomal protein uS3 family. In terms of assembly, part of the 30S ribosomal subunit. Forms a tight complex with proteins S10 and S14.

Functionally, binds the lower part of the 30S subunit head. Binds mRNA in the 70S ribosome, positioning it for translation. The chain is Small ribosomal subunit protein uS3 from Borrelia hermsii (strain HS1 / DAH).